An 833-amino-acid polypeptide reads, in one-letter code: Toll-like receptor 4 (833 aa).

The first 23 residues, 1–23, serve as a signal peptide directing secretion; it reads MMPPTRLAGTLIPAMAFLSCLRP. The LRRNT domain occupies 24 to 54; the sequence is ESWDPCVEVVPNITYQCMDLNLHKIPDNIPS. Topologically, residues 24 to 632 are extracellular; the sequence is ESWDPCVEVV…FRNATCQVRK (609 aa). Cysteines 29 and 40 form a disulfide. N-linked (GlcNAc...) asparagine glycosylation is present at Asn35. LRR repeat units lie at residues 55–76, 79–100, 103–124, 127–148, and 151–172; these read STKD…SFSN, ELQV…AYQG, HLSI…AFSG, SLQT…PIGH, and TLKE…EYFS. N-linked (GlcNAc...) asparagine glycosylation is present at Asn173. 3 LRR repeats span residues 176–197, 205–225, and 227–236; these read NLEY…DLQV, NLSL…AFKE, and KLRELTLRSN. The N-linked (GlcNAc...) asparagine glycan is linked to Asn205. Asn238 carries N-linked (GlcNAc...) asparagine glycosylation. Cysteines 281 and 306 form a disulfide. N-linked (GlcNAc...) asparagine glycosylation occurs at Asn309. LRR repeat units lie at residues 352–373, 374–394, 400–420, 423–444, 448–456, 472–495, 497–518, 521–542, and 545–565; these read PLKE…VKLE, SLEF…CSER, RLKH…NFLG, QLEY…SVFL, NLRYLDISY, SLQI…FMEL, NLTI…AFNS, KLQL…PYEP, and SLQT…QELR. A disulfide bridge connects residues Cys390 and Cys391. 2 N-linked (GlcNAc...) asparagine glycosylation sites follow: Asn497 and Asn526. N-linked (GlcNAc...) asparagine glycosylation is found at Asn570 and Asn575. The LRRCT domain occupies 579-630; that stretch reads NDFACVCEHQSFLQWVKDQRQLLVEVEQMVCAKPLDMQGMPMLNFRNATCQV. Disulfide bonds link Cys583/Cys609 and Cys585/Cys628. Asn625 carries N-linked (GlcNAc...) asparagine glycosylation. Residues 633-653 traverse the membrane as a helical segment; it reads TIITGSVFTVLLVFLVVVLVY. At 654-833 the chain is on the cytoplasmic side; it reads KFYFHLMLLA…PEGMADAEGS (180 aa). Residues 673-816 enclose the TIR domain; the sequence is STYDAFVIYS…IFWRRLRKAL (144 aa).

It belongs to the Toll-like receptor family. As to quaternary structure, belongs to the lipopolysaccharide (LPS) receptor, a multi-protein complex containing at least CD14, LY96 and TLR4. Binding to bacterial LPS leads to homodimerization. Interacts with LY96 via the extracellular domain. Interacts with MYD88 and TIRAP via their respective TIR domains. Interacts with TICAM2. Interacts with NOX4. Interacts with CNPY3 and HSP90B1; this interaction is required for proper folding in the endoplasmic reticulum. Interacts with MAP3K21; this interaction leads to negative regulation of TLR4 signaling. Interacts with CD36, following CD36 stimulation by oxLDL or amyloid-beta 42, and forms a heterodimer with TLR6. The trimeric complex is internalized and triggers inflammatory response. LYN kinase activity facilitates TLR4-TLR6 heterodimerization and signal initiation. Interacts with TICAM1 in response to LPS in a WDFY1-dependent manner. Interacts with WDFY1 in response to LPS. Interacts with SMPDL3B. Interacts with CEACAM1; upon lipopolysaccharide stimulation, forms a complex including TLR4 and the phosphorylated form of SYK and CEACAM1, which in turn, recruits PTPN6 that dephosphorylates SYK, reducing the production of reactive oxygen species (ROS) and lysosome disruption, which in turn, reduces the activity of the inflammasome. Interacts with RFTN1; the interaction occurs in response to lipopolysaccharide stimulation. Interacts with SCIMP; the interaction occurs in response to lipopolysaccharide stimulation and is enhanced by phosphorylation of SCIMP by LYN. This interaction facilitates the phosphorylation of TLR4 by LYN which elicits a selective cytokine response in macrophages. Interacts with TRAF3IP3. Interacts with TREM1; this interaction enhances TLR4-mediated inflammatory response. Interacts with ZG16B/PAUF. Interacts with CD82; this interaction inhibits TLR4-mediated signaling pathway. Post-translationally, phosphorylated on tyrosine residues by LYN after binding lipopolysaccharide. In terms of processing, ubiquitinated by RNF128 via 'Lys-28'-linked polyubiquitin chains, leading to proteasomal degradation.

It is found in the cell membrane. The protein localises to the early endosome. Its subcellular location is the cell projection. The protein resides in the ruffle. In terms of biological role, transmembrane receptor that functions as a pattern recognition receptor recognizing pathogen- and damage-associated molecular patterns (PAMPs and DAMPs) to induce innate immune responses via downstream signaling pathways. At the plasma membrane, cooperates with LY96 to mediate the innate immune response to bacterial lipopolysaccharide (LPS). Also involved in LPS-independent inflammatory responses triggered by free fatty acids, such as palmitate, and Ni(2+). Mechanistically, acts via MYD88, TIRAP and TRAF6, leading to NF-kappa-B activation, cytokine secretion and the inflammatory response. Alternatively, CD14-mediated TLR4 internalization via endocytosis is associated with the initiation of a MYD88-independent signaling via the TICAM1-TBK1-IRF3 axis leading to type I interferon production. In addition to the secretion of proinflammatory cytokines, initiates the activation of NLRP3 inflammasome and formation of a positive feedback loop between autophagy and NF-kappa-B signaling cascade. In complex with TLR6, promotes inflammation in monocytes/macrophages by associating with TLR6 and the receptor CD86. Upon ligand binding, such as oxLDL or amyloid-beta 42, the TLR4:TLR6 complex is internalized and triggers inflammatory response, leading to NF-kappa-B-dependent production of CXCL1, CXCL2 and CCL9 cytokines, via MYD88 signaling pathway, and CCL5 cytokine, via TICAM1 signaling pathway. In myeloid dendritic cells, vesicular stomatitis virus glycoprotein G but not LPS promotes the activation of IRF7, leading to type I IFN production in a CD14-dependent manner. The protein is Toll-like receptor 4 (TLR4) of Felis catus (Cat).